The chain runs to 102 residues: DNA/RNA-binding protein Alba 2 (102 aa).

DNA is bound by residues R10, R13, R40, R42, N43, R46, and R86.

It belongs to the histone-like Alba family. As to quaternary structure, forms homodimers and homotetramers; oligomerization is enhanced and stabilized by DNA. Interacts with Alba 1.

It localises to the cytoplasm. The protein resides in the chromosome. In terms of biological role, binds double-stranded DNA tightly but without sequence specificity. Involved in DNA compaction. The polypeptide is DNA/RNA-binding protein Alba 2 (Aeropyrum pernix (strain ATCC 700893 / DSM 11879 / JCM 9820 / NBRC 100138 / K1)).